The chain runs to 367 residues: Putative isomerase YraM (367 aa).

Belongs to the PrpF family.

This chain is Putative isomerase YraM (yraM), found in Bacillus subtilis (strain 168).